The primary structure comprises 231 residues: Orotidine 5'-phosphate decarboxylase (231 aa).

Substrate contacts are provided by residues Asp9, Lys34, 62 to 71 (DLKLHDIPSV), Thr117, Arg179, Gln188, Gly208, and Arg209. The active-site Proton donor is the Lys64.

It belongs to the OMP decarboxylase family. Type 1 subfamily. Homodimer.

It carries out the reaction orotidine 5'-phosphate + H(+) = UMP + CO2. It participates in pyrimidine metabolism; UMP biosynthesis via de novo pathway; UMP from orotate: step 2/2. Its function is as follows. Catalyzes the decarboxylation of orotidine 5'-monophosphate (OMP) to uridine 5'-monophosphate (UMP). This Aquifex aeolicus (strain VF5) protein is Orotidine 5'-phosphate decarboxylase.